Here is a 151-residue protein sequence, read N- to C-terminus: Transcriptional repressor NrdR (151 aa).

A zinc finger spans residues 3–34 (CPYCGYIEDRVIDSRPTDEGSAIRRRRECSKC). The 91-residue stretch at 49-139 (IMVIKKDKSR…VYRQFKDINT (91 aa)) folds into the ATP-cone domain.

It belongs to the NrdR family. Requires Zn(2+) as cofactor.

Negatively regulates transcription of bacterial ribonucleotide reductase nrd genes and operons by binding to NrdR-boxes. This chain is Transcriptional repressor NrdR, found in Acetivibrio thermocellus (strain ATCC 27405 / DSM 1237 / JCM 9322 / NBRC 103400 / NCIMB 10682 / NRRL B-4536 / VPI 7372) (Clostridium thermocellum).